The chain runs to 966 residues: MKLLTAKEVRNAYLDFFKEQKHIYVHSSSTIPLDDPTLLFANAGMNQFKPIFLGTADPNSEMSKWVRVANTQKCIRAGGKHNDLDDVGKDVYHHTFFEMLGNWSFGDYFKKEICSWAWEFLTQRLALPKDRLYVTYFGGDAASGLEPDLECKQMWLDLGLKPEHILPGSMKDNFWEMGETGPCGPCSELHFDRIGGRSVPELVNMDDPDVLEIWNLVFIQYNRESDGSLKQLPKKHIDCGMGFERLVSVIQNKRSNYDTDLFVPLFDAIQAGTGAPPYQGRVGADDVDGIDMAYRVLADHARTITIALADGGTPDNTGRGYVLRRILRRAVRYATEKLNAKPGFFATLVNTVVDLLGDAFPEVKKDPQHIIDIINEEELQFLKTLTRGRNLLNRTIEKLGNQTTIPGDVAWRLYDTYGFPVDLTQLMAEEKSLKIDMDGYEAAKHNSYVLSQGKGASKIEEINLDVHAISQLQEQGVPPTNDTFKYKYEAVSDERDSAYNYGVCNSKIVALRFENQFVNEITSGQKAGIVLDKTNFYAESGGQIYDQGALVKVNDEANEFLVDRVYNRGGYILHIGVVEGTLKVGDELELHIDVERRWLTMKNHSATHALNHCLLQVLGKDTEQKGSLVVPEKLRFDFNSKAAMTIEQVSKTEQLTKEMVYKNVPIYAKESKLALAKKIRGLRSVFDEVYPDPVRVISFGVPVDELEQNPDSEAGEQTSVEFCGGTHLRRSGHIMDFVISSEEAIAKGIRRIVALTGPEALKALKKSEAFEQEIVRLKATIDNDKSGKDSKSHVKEIVELTEQISHATIPYVKKDEMRNLLKGLKKTLDDKERALRAAVSVTVVERAKTLCEANPNATVLVEQLEAFNNTKALDAALKQVRSQLPDAAAMFLSVDADSKKIFCLSSVPKSAVEKGLKANEWVQHVSATLGGKGGGKPESAQASGTNYEKVDEIVQLASKFAQSKLS.

Positions 604, 608, 723, and 727 each coordinate Zn(2+).

This sequence belongs to the class-II aminoacyl-tRNA synthetase family. Monomer. It depends on Zn(2+) as a cofactor.

Its subcellular location is the cytoplasm. It catalyses the reaction tRNA(Ala) + L-alanine + ATP = L-alanyl-tRNA(Ala) + AMP + diphosphate. Catalyzes the attachment of alanine to tRNA(Ala) in a two-step reaction: alanine is first activated by ATP to form Ala-AMP and then transferred to the acceptor end of tRNA(Ala). Also edits incorrectly charged tRNA(Ala) via its editing domain. This Drosophila melanogaster (Fruit fly) protein is Alanine--tRNA ligase, cytoplasmic.